A 102-amino-acid polypeptide reads, in one-letter code: Small ribosomal subunit protein uS10 (102 aa).

This sequence belongs to the universal ribosomal protein uS10 family. As to quaternary structure, part of the 30S ribosomal subunit.

In terms of biological role, involved in the binding of tRNA to the ribosomes. The polypeptide is Small ribosomal subunit protein uS10 (Desulfitobacterium hafniense (strain DSM 10664 / DCB-2)).